A 273-amino-acid chain; its full sequence is 2-dehydro-3-deoxyphosphooctonate aldolase (273 aa).

Belongs to the KdsA family.

The protein resides in the cytoplasm. It carries out the reaction D-arabinose 5-phosphate + phosphoenolpyruvate + H2O = 3-deoxy-alpha-D-manno-2-octulosonate-8-phosphate + phosphate. It functions in the pathway carbohydrate biosynthesis; 3-deoxy-D-manno-octulosonate biosynthesis; 3-deoxy-D-manno-octulosonate from D-ribulose 5-phosphate: step 2/3. It participates in bacterial outer membrane biogenesis; lipopolysaccharide biosynthesis. This is 2-dehydro-3-deoxyphosphooctonate aldolase from Citrifermentans bemidjiense (strain ATCC BAA-1014 / DSM 16622 / JCM 12645 / Bem) (Geobacter bemidjiensis).